Consider the following 734-residue polypeptide: MALRFPRFSQGLAQDPTTRRIWFGIATAHDFESHDDITEERLYQNIFASHFGQLAIIFLWTSGNLFHVAWQGNFESWVQDPLHVRPIAHAIWDPHFGQPAVEAFTRGGALGPVNIAYSGVYQWWYTIGLRTNEDLYTGALFLLFLSAISLIAGWLHLQPKWKPSVSWFKNAESRLNHHLSGLFGVSSLAWTGHLVHVAIPASRGEYVRWNNFLDVLPHPQGLGPLFTGQWNLYAQNPDSSSHLFGTAQGAGTAILTLLGGFHPQTQSLWLTDIAHHHLAIAFIFLVAGHMYRTNFGIGHSMKDLLDAHIPPGGRLGRGHKGLYDTINNSLHFQLGLALASLGVITSLVAQHMYSLPAYAFIAQDFTTQAALYTHHQYIAGFIMTGAFAHGAIFFIRDYNPEQNEDNVLARMLEHKEAIISHLSWASLFLGFHTLGLYVHNDVMLAFGTPEKQILIEPIFAQWIQSAHGKTSYGFDVLLSSTSGPAFNAGRSIWLPGWLNAVNENSNSLFLTIGPGDFLVHHAIALGLHTTTLILVKGALDARGSKLMPDKKDFGYSFPCDGPGRGGTCDISAWDAFYLAVFWMLNTIGWVTFYWHWKHITLWQGNVSQFNESSTYLMGWLRDYLWLNSSQLINGYNPFGMNSLSVWAWMFLFGHLVWATGFMFLISWRGYWQELIETLAWAHERTPLANLIRWRDKPVALSIVQARLVGLAHFSVGYIFTYAAFLIASTSGKFG.

8 helical membrane-spanning segments follow: residues 46 to 69, 135 to 158, 175 to 199, 273 to 291, 330 to 353, 369 to 395, 417 to 439, and 517 to 535; these read IFAS…FHVA, LYTG…LHLQ, LNHH…HVAI, IAHH…GHMY, LHFQ…QHMY, AALY…IFFI, AIIS…LYVH, and FLVH…LILV. Cys559 and Cys568 together coordinate [4Fe-4S] cluster. The next 2 membrane-spanning stretches (helical) occupy residues 575–596 and 643–665; these read AFYL…YWHW and LSVW…MFLI. His654, Met662, and Tyr670 together coordinate chlorophyll a. Trp671 is a phylloquinone binding site. Residues 707–727 traverse the membrane as a helical segment; that stretch reads LVGLAHFSVGYIFTYAAFLIA.

Belongs to the PsaA/PsaB family. As to quaternary structure, the PsaA/B heterodimer binds the P700 chlorophyll special pair and subsequent electron acceptors. PSI consists of a core antenna complex that captures photons, and an electron transfer chain that converts photonic excitation into a charge separation. The eukaryotic PSI reaction center is composed of at least 11 subunits. P700 is a chlorophyll a/chlorophyll a' dimer, A0 is one or more chlorophyll a, A1 is one or both phylloquinones and FX is a shared 4Fe-4S iron-sulfur center. serves as cofactor.

It localises to the plastid. Its subcellular location is the chloroplast thylakoid membrane. The catalysed reaction is reduced [plastocyanin] + hnu + oxidized [2Fe-2S]-[ferredoxin] = oxidized [plastocyanin] + reduced [2Fe-2S]-[ferredoxin]. PsaA and PsaB bind P700, the primary electron donor of photosystem I (PSI), as well as the electron acceptors A0, A1 and FX. PSI is a plastocyanin-ferredoxin oxidoreductase, converting photonic excitation into a charge separation, which transfers an electron from the donor P700 chlorophyll pair to the spectroscopically characterized acceptors A0, A1, FX, FA and FB in turn. Oxidized P700 is reduced on the lumenal side of the thylakoid membrane by plastocyanin. The chain is Photosystem I P700 chlorophyll a apoprotein A2 from Nicotiana tabacum (Common tobacco).